The following is a 235-amino-acid chain: Phosphoribosylaminoimidazole-succinocarboxamide synthase (235 aa).

The protein belongs to the SAICAR synthetase family.

The enzyme catalyses 5-amino-1-(5-phospho-D-ribosyl)imidazole-4-carboxylate + L-aspartate + ATP = (2S)-2-[5-amino-1-(5-phospho-beta-D-ribosyl)imidazole-4-carboxamido]succinate + ADP + phosphate + 2 H(+). It functions in the pathway purine metabolism; IMP biosynthesis via de novo pathway; 5-amino-1-(5-phospho-D-ribosyl)imidazole-4-carboxamide from 5-amino-1-(5-phospho-D-ribosyl)imidazole-4-carboxylate: step 1/2. The chain is Phosphoribosylaminoimidazole-succinocarboxamide synthase (purC) from Streptococcus pneumoniae serotype 4 (strain ATCC BAA-334 / TIGR4).